The sequence spans 274 residues: NH(3)-dependent NAD(+) synthetase (274 aa).

46–53 (GISGGQDS) contacts ATP. Asp-52 provides a ligand contact to Mg(2+). Arg-140 serves as a coordination point for deamido-NAD(+). Thr-160 is an ATP binding site. Glu-165 contributes to the Mg(2+) binding site. Deamido-NAD(+) contacts are provided by Lys-173 and Asp-180. ATP-binding residues include Lys-189 and Thr-211. 260-261 (HK) serves as a coordination point for deamido-NAD(+).

The protein belongs to the NAD synthetase family. As to quaternary structure, homodimer.

The catalysed reaction is deamido-NAD(+) + NH4(+) + ATP = AMP + diphosphate + NAD(+) + H(+). It participates in cofactor biosynthesis; NAD(+) biosynthesis; NAD(+) from deamido-NAD(+) (ammonia route): step 1/1. Functionally, catalyzes the ATP-dependent amidation of deamido-NAD to form NAD. Uses ammonia as a nitrogen source. In Sodalis glossinidius (strain morsitans), this protein is NH(3)-dependent NAD(+) synthetase.